A 483-amino-acid chain; its full sequence is Regulatory protein ViaA (483 aa).

Belongs to the ViaA family. In terms of assembly, homodimer. Interacts with RavA.

Its subcellular location is the cytoplasm. Its function is as follows. Component of the RavA-ViaA chaperone complex, which may act on the membrane to optimize the function of some of the respiratory chains. ViaA stimulates the ATPase activity of RavA. The chain is Regulatory protein ViaA from Escherichia coli O9:H4 (strain HS).